The primary structure comprises 316 residues: DNA-directed RNA polymerase III subunit RPC6 (316 aa).

A2 carries the post-translational modification N-acetylalanine. Glycyl lysine isopeptide (Lys-Gly) (interchain with G-Cter in SUMO2) cross-links involve residues K5 and K7. [4Fe-4S] cluster contacts are provided by C287, C290, C296, and C307.

It belongs to the eukaryotic RPC34/RPC39 RNA polymerase subunit family. Component of the RNA polymerase III complex consisting of 17 subunits: a ten-subunit horseshoe-shaped catalytic core composed of POLR3A/RPC1, POLR3B/RPC2, POLR1C/RPAC1, POLR1D/RPAC2, POLR3K/RPC10, POLR2E/RPABC1, POLR2F/RPABC2, POLR2H/RPABC3, POLR2K/RPABC4 and POLR2L/RPABC5; a mobile stalk composed of two subunits POLR3H/RPC8 and CRCP/RPC9, protruding from the core and functioning primarily in transcription initiation; and additional subunits homologous to general transcription factors of the RNA polymerase II machinery, POLR3C/RPC3-POLR3F/RPC6-POLR3G/RPC7 heterotrimer required for transcription initiation and POLR3D/RPC4-POLR3E/RPC5 heterodimer involved in both transcription initiation and termination. Directly interacts with POLR3C. Interacts with TBP and TFIIIB90 and GTF3C4. Interacts with MAF1. As part of the RNA polymerase III complex, interacts with PKP2.

It is found in the nucleus. Its function is as follows. DNA-dependent RNA polymerase catalyzes the transcription of DNA into RNA using the four ribonucleoside triphosphates as substrates. Specific peripheric component of RNA polymerase III (Pol III) which synthesizes small non-coding RNAs including 5S rRNA, snRNAs, tRNAs and miRNAs from at least 500 distinct genomic loci. Part of POLR3C/RPC3-POLR3F/RPC6-POLR3G/RPC7 heterotrimer that coordinates the dynamics of Pol III stalk and clamp modules during the transition from apo to elongation state. Pol III plays a key role in sensing and limiting infection by intracellular bacteria and DNA viruses, including varicella zoster virus. Acts as a nuclear and cytosolic DNA sensor detecting AT-rich DNA, involved in innate immune response. Can sense non-self dsDNA that serves as template for transcription into dsRNA. The non-self RNA polymerase III transcripts, such as Epstein-Barr virus-encoded RNAs (EBERs) induce type I interferon and NF-kappa-B through the RIG-I pathway. Preferentially binds double-stranded DNA (dsDNA). This chain is DNA-directed RNA polymerase III subunit RPC6, found in Mus musculus (Mouse).